The chain runs to 497 residues: NAD(P)H-quinone oxidoreductase chain 4, chloroplastic (497 aa).

14 helical membrane passes run V5 to L25, Y36 to F56, L88 to I108, T112 to S132, I135 to L155, F168 to F188, V212 to H232, H243 to I263, F275 to I295, I306 to E326, G331 to G351, L387 to T407, G418 to L438, and L463 to I483.

It belongs to the complex I subunit 4 family.

It localises to the plastid. It is found in the chloroplast thylakoid membrane. It carries out the reaction a plastoquinone + NADH + (n+1) H(+)(in) = a plastoquinol + NAD(+) + n H(+)(out). The enzyme catalyses a plastoquinone + NADPH + (n+1) H(+)(in) = a plastoquinol + NADP(+) + n H(+)(out). The sequence is that of NAD(P)H-quinone oxidoreductase chain 4, chloroplastic from Adiantum capillus-veneris (Maidenhair fern).